Consider the following 599-residue polypeptide: NADH-quinone oxidoreductase subunit C/D (599 aa).

Positions Met-1–Glu-189 are NADH dehydrogenase I subunit C. An NADH dehydrogenase I subunit D region spans residues Asp-213 to Arg-599.

It in the N-terminal section; belongs to the complex I 30 kDa subunit family. In the C-terminal section; belongs to the complex I 49 kDa subunit family. As to quaternary structure, NDH-1 is composed of 13 different subunits. Subunits NuoB, CD, E, F, and G constitute the peripheral sector of the complex.

It is found in the cell inner membrane. The catalysed reaction is a quinone + NADH + 5 H(+)(in) = a quinol + NAD(+) + 4 H(+)(out). NDH-1 shuttles electrons from NADH, via FMN and iron-sulfur (Fe-S) centers, to quinones in the respiratory chain. The immediate electron acceptor for the enzyme in this species is believed to be ubiquinone. Couples the redox reaction to proton translocation (for every two electrons transferred, four hydrogen ions are translocated across the cytoplasmic membrane), and thus conserves the redox energy in a proton gradient. The protein is NADH-quinone oxidoreductase subunit C/D of Sodalis glossinidius (strain morsitans).